The following is a 151-amino-acid chain: Deoxyuridine 5'-triphosphate nucleotidohydrolase (151 aa).

Residues 70–72, Asn-83, 87–89, and Met-97 contribute to the substrate site; these read RSG and LID.

It belongs to the dUTPase family. Mg(2+) is required as a cofactor.

It carries out the reaction dUTP + H2O = dUMP + diphosphate + H(+). It functions in the pathway pyrimidine metabolism; dUMP biosynthesis; dUMP from dCTP (dUTP route): step 2/2. Its function is as follows. This enzyme is involved in nucleotide metabolism: it produces dUMP, the immediate precursor of thymidine nucleotides and it decreases the intracellular concentration of dUTP so that uracil cannot be incorporated into DNA. This chain is Deoxyuridine 5'-triphosphate nucleotidohydrolase, found in Yersinia enterocolitica serotype O:8 / biotype 1B (strain NCTC 13174 / 8081).